The sequence spans 868 residues: MAEKVSEDVMLLHGDLDLKIVKARRLPNMDMFSEHLRRLFTACNACARPTDTDDVDPRDKGEFGDKNIRSHRKVITSDPYVTVVVPQATLARTRVLKNSQEPLWDEKFNISIAHPFAYLEFQVKDDDVFGAQIIGTAKIPVRDIASGERISGWFPVLGASGKPPKAETAIFIDMKFTPFDQIHSYRCGIAGDPERRGVRRTYFPVRKGSQVRLYQDAHVMDGTLPAIGLDNGKVYEHGKCWEDICYAISEAHHMIYIVGWSIFHKIKLVRETKVPRDKDMTLGELLKYKSQEGVRVLLLVWDDKTSHDKFGIKTPGVMGTHDEETRKFFKHSSVICVLSPRYASSKLGLFKQQASPSSSIYIMTVVGTLFTHHQKCVLVDTQAVGNNRKVTAFIGGLDLCDGRYDTPEHRILHDLDTVFKDDFHNPTFPAGTKAPRQPWHDLHCRIDGPAAYDVLINFEQRWRKATRWKEFSLRLKGKTHWQDDALIRIGRISWILSPVFKFLKDGTSIIPEDDPCVWVSKEDDPENWHVQIFRSIDSGSVKGFPKYEDEAEAQHLECAKRLVVDKSIQTAYIQTIRSAQHFIYIENQYFLGSSYAWPSYRDAGADNLIPMELALKIVSKIRAKERFAVYVVIPLWPEGDPKSGPVQEILYWQSQTMQMMYDVIAKELKAVQSDAHPLDYLNFYCLGKREQLPDDMPATNGSVVSDSYNFQRFMIYVHAKGMIVDDEYVLMGSANINQRSMAGTKDTEIAMGAYQPNHTWAHKGRHPRGQVYGYRMSLWAEHLGKTGDEFVEPSDLECLKKVNTISEENWKRFIDPKFSELQGHLIKYPLQVDVDGKVSPLPDYETFPDVGGKIIGAHSMALPDTLTT.

Residues 1–154 enclose the C2 domain; it reads MAEKVSEDVM…ASGERISGWF (154 aa). Asp-216 serves as a coordination point for Ca(2+). The PLD phosphodiesterase 1 domain maps to 368–403; the sequence is TLFTHHQKCVLVDTQAVGNNRKVTAFIGGLDLCDGR. Active-site residues include His-373, Lys-375, and Asp-380. His-373 contacts a 1,2-diacyl-sn-glycero-3-phosphate. Ca(2+)-binding residues include His-409 and His-440. A 1,2-diacyl-sn-glycero-3-phosphate-binding residues include Gln-588 and His-718. Positions 713–740 constitute a PLD phosphodiesterase 2 domain; sequence FMIYVHAKGMIVDDEYVLMGSANINQRS. Active-site residues include His-718, Lys-720, and Asp-725. Glu-781 is a binding site for Ca(2+).

Belongs to the phospholipase D family. C2-PLD subfamily. In terms of assembly, interacts with GAPC1 and GAPC2. Increased interaction in the presence of H(2)O(2). Ca(2+) serves as cofactor. As to expression, expressed in roots, leaves, stems, siliques and flowers. Strongly expressed in the vascular tissues of cotyledons and leaves under dehydration stress conditions. Expression is higher in old leaves than in young leaves. Expressed in leaves and guard cells. The isoform 2 may not be present in siliques.

The protein localises to the cell membrane. The catalysed reaction is a 1,2-diacyl-sn-glycero-3-phosphocholine + H2O = a 1,2-diacyl-sn-glycero-3-phosphate + choline + H(+). With respect to regulation, activated by free oleic acid in a dose-dependent manner and less effectively by other unsaturated fatty acids such as linoleic and linolenic acids. Not activated by the saturated fatty acids stearic and palmitic acids. PIP2 and Ca(2+) stimulate activity by promoting lipid substrate binding to the active site. Activated by H(2)O(2) and by binding to GAPC. In terms of biological role, hydrolyzes glycerol-phospholipids at the terminal phosphodiesteric bond to generate phosphatidic acids (PA). May be involved in PA accumulation in the dehydration stress response and in the transduction of hormonal and environmental signals to the microtubules cytoskeleton. Prefers phosphatidylethanolamine to phosphatidylcholine as substrate. Involved in H(2)O(2) and abscisic acid (ABA)-induced stomatal closure. Involved in nitric oxide (NO) signaling during stomatal closure. Plays a positive role in ABA-promoted senescence. Involved in basal defense and nonhost resistance. This is Phospholipase D delta from Arabidopsis thaliana (Mouse-ear cress).